A 413-amino-acid chain; its full sequence is Probable isoleucine--tRNA ligase, mitochondrial (413 aa).

A 'KMSKS' region motif is present at residues 298–302 (KMSKS). Lys301 is an ATP binding site.

This sequence belongs to the class-I aminoacyl-tRNA synthetase family.

The protein resides in the mitochondrion matrix. The enzyme catalyses tRNA(Ile) + L-isoleucine + ATP = L-isoleucyl-tRNA(Ile) + AMP + diphosphate. The sequence is that of Probable isoleucine--tRNA ligase, mitochondrial from Ciona intestinalis (Transparent sea squirt).